A 644-amino-acid polypeptide reads, in one-letter code: 3D-(3,5/4)-trihydroxycyclohexane-1,2-dione hydrolase 2 (644 aa).

Glu-65 contributes to the thiamine diphosphate binding site. The interval 442 to 522 is thiamine pyrophosphate binding; sequence SLPGDLQRMW…INVLLFDNSG (81 aa). Mg(2+) is bound by residues Asp-493 and Asn-520.

This sequence belongs to the TPP enzyme family. Mg(2+) is required as a cofactor. Thiamine diphosphate serves as cofactor.

The enzyme catalyses 3D-3,5/4-trihydroxycyclohexane-1,2-dione + H2O = 5-deoxy-D-glucuronate + H(+). It functions in the pathway polyol metabolism; myo-inositol degradation into acetyl-CoA; acetyl-CoA from myo-inositol: step 3/7. Functionally, involved in the cleavage of the C1-C2 bond of 3D-(3,5/4)-trihydroxycyclohexane-1,2-dione (THcHDO) to yield 5-deoxy-glucuronate (5DG). This is 3D-(3,5/4)-trihydroxycyclohexane-1,2-dione hydrolase 2 from Bacillus cereus (strain ZK / E33L).